The primary structure comprises 109 residues: Mitochondrial pyruvate carrier 1 (109 aa).

Alanine 2 carries the post-translational modification N-acetylalanine. At 2–20 the chain is on the mitochondrial matrix side; it reads AGALVRKAADYVRSKDFRD. The chain crosses the membrane as a helical span at residues 21–41; it reads YLMSTHFWGPVANWGLPIAAI. Residues 42–52 lie on the Mother cell cytoplasmic side of the membrane; the sequence is NDMKKSPEIIS. The helical transmembrane segment at 53 to 71 threads the bilayer; sequence GRMTFALCCYSLTFMRFAY. Lysine 72 carries the post-translational modification N6-acetyllysine. At 72-109 the chain is on the mitochondrial matrix side; that stretch reads KVQPRNWLLFACHATNEVAQLIQGGRLIRHEMSKKASA.

Homodimer. Forms heterodimer with MPC2. The heterodimer is the more stable and dominant form.

It localises to the mitochondrion inner membrane. The enzyme catalyses pyruvate(out) + H(+)(out) = pyruvate(in) + H(+)(in). Its function is as follows. Mediates the uptake of pyruvate into mitochondria. The polypeptide is Mitochondrial pyruvate carrier 1 (MPC1) (Bos taurus (Bovine)).